A 491-amino-acid polypeptide reads, in one-letter code: Cobyric acid synthase (491 aa).

The GATase cobBQ-type domain maps to 246-435 (KIDVAVIKLP…IHGIFDGANF (190 aa)). Cysteine 327 acts as the Nucleophile in catalysis. Residue histidine 427 is part of the active site.

The protein belongs to the CobB/CobQ family. CobQ subfamily.

It functions in the pathway cofactor biosynthesis; adenosylcobalamin biosynthesis. Its function is as follows. Catalyzes amidations at positions B, D, E, and G on adenosylcobyrinic A,C-diamide. NH(2) groups are provided by glutamine, and one molecule of ATP is hydrogenolyzed for each amidation. The chain is Cobyric acid synthase from Clostridium acetobutylicum (strain ATCC 824 / DSM 792 / JCM 1419 / IAM 19013 / LMG 5710 / NBRC 13948 / NRRL B-527 / VKM B-1787 / 2291 / W).